The following is a 423-amino-acid chain: MEYLTNLKTNIMDKQLGHREVSEGSTQPKPDPSGATMKACVWDGPLNVKIAEVPKPTITHPKDVIVKTTACTICSGSDSHIFSGEMPGIEKGAILGHESCGIVAEKGDEVNNLEIGDRVVIAFDLACGQCSFCKRHEYAACDTTNDSKLMDVNYGSHHSAIFGYTKLLGDVPGCQAEYIRVPFAEINCCKLPDDIPDSEGLFMSDVLCTSLHACTLGEVKKGDTVAIWGMGPIGLYAGRWAQILGASKVIGIEVVPERIELARQKFGFTVIDRNEVSDVPKKIMELVSNGVDCAIEASGFRFSTSILHKVERAVGLETDSPDMITECLNAVRKYGHVSIIADYVGTSNQFPIGHVVMKHLTIRSGQCPCQNYFGYVIDNIRSGKIDPRWMVTNKIKFDDLPDAYNKLFYKEDGYVKVYCDMTE.

Residues 14 to 36 (KQLGHREVSEGSTQPKPDPSGAT) form a disordered region. Cys74, His97, Cys127, Cys130, Cys133, and Cys141 together coordinate Zn(2+).

The protein belongs to the zinc-containing alcohol dehydrogenase family. Class-III subfamily. Zn(2+) is required as a cofactor.

It is found in the golgi apparatus. The chain is Zinc-type alcohol dehydrogenase-like protein C1198.01 from Schizosaccharomyces pombe (strain 972 / ATCC 24843) (Fission yeast).